A 231-amino-acid polypeptide reads, in one-letter code: Phosphatidylserine decarboxylase proenzyme (231 aa).

The active-site Schiff-base intermediate with substrate; via pyruvic acid is the S188. S188 is modified (pyruvic acid (Ser); by autocatalysis).

Belongs to the phosphatidylserine decarboxylase family. PSD-A subfamily. As to quaternary structure, heterodimer of a large membrane-associated beta subunit and a small pyruvoyl-containing alpha subunit. The cofactor is pyruvate. Post-translationally, is synthesized initially as an inactive proenzyme. Formation of the active enzyme involves a self-maturation process in which the active site pyruvoyl group is generated from an internal serine residue via an autocatalytic post-translational modification. Two non-identical subunits are generated from the proenzyme in this reaction, and the pyruvate is formed at the N-terminus of the alpha chain, which is derived from the carboxyl end of the proenzyme. The post-translation cleavage follows an unusual pathway, termed non-hydrolytic serinolysis, in which the side chain hydroxyl group of the serine supplies its oxygen atom to form the C-terminus of the beta chain, while the remainder of the serine residue undergoes an oxidative deamination to produce ammonia and the pyruvoyl prosthetic group on the alpha chain.

The protein localises to the cell membrane. It catalyses the reaction a 1,2-diacyl-sn-glycero-3-phospho-L-serine + H(+) = a 1,2-diacyl-sn-glycero-3-phosphoethanolamine + CO2. The protein operates within phospholipid metabolism; phosphatidylethanolamine biosynthesis; phosphatidylethanolamine from CDP-diacylglycerol: step 2/2. Its function is as follows. Catalyzes the formation of phosphatidylethanolamine (PtdEtn) from phosphatidylserine (PtdSer). This chain is Phosphatidylserine decarboxylase proenzyme, found in Rickettsia bellii (strain OSU 85-389).